Reading from the N-terminus, the 822-residue chain is ATP-dependent zinc metalloprotease FTSH 8, mitochondrial (822 aa).

Over residues 1–25 (MSLASLARALSRRSAPSSSRARQGF) the composition is skewed to low complexity. Disordered regions lie at residues 1-50 (MSLA…LHGG), 103-131 (NYYP…STDD), and 202-221 (SSPQ…TTND). The transit peptide at 1-93 (MSLASLARAL…LANPQFRRLF (93 aa)) directs the protein to the mitochondrion. The segment covering 108-127 (GKKEAPKGDGSNKSDSKQDS) has biased composition (basic and acidic residues). 375–382 (GPPGTGKT) serves as a coordination point for ATP. Residue His600 coordinates Zn(2+). Glu601 is an active-site residue. Residues His604 and Asp676 each contribute to the Zn(2+) site. Positions 781 to 822 (PTNYDLFKQGFQDEEDSKNQEAAKTPQPDDDGTPSLGEVVPT) are disordered.

It in the N-terminal section; belongs to the AAA ATPase family. This sequence in the C-terminal section; belongs to the peptidase M41 family. It depends on Zn(2+) as a cofactor.

The protein resides in the mitochondrion. In terms of biological role, probable ATP-dependent zinc metallopeptidase. This is ATP-dependent zinc metalloprotease FTSH 8, mitochondrial (FTSH8) from Oryza sativa subsp. japonica (Rice).